The sequence spans 67 residues: Large ribosomal subunit protein bL31 (67 aa).

It belongs to the bacterial ribosomal protein bL31 family. Type A subfamily. As to quaternary structure, part of the 50S ribosomal subunit.

Binds the 23S rRNA. This Helicobacter acinonychis (strain Sheeba) protein is Large ribosomal subunit protein bL31.